The sequence spans 179 residues: Inner membrane-spanning protein YciB (179 aa).

5 consecutive transmembrane segments (helical) span residues 22–42 (IYAA…YSWV), 50–70 (MALI…FFHN), 76–96 (WKVT…QWVM), 121–141 (LAWA…AFWL), and 149–169 (FKVF…GIYI).

This sequence belongs to the YciB family.

Its subcellular location is the cell inner membrane. Functionally, plays a role in cell envelope biogenesis, maintenance of cell envelope integrity and membrane homeostasis. The chain is Inner membrane-spanning protein YciB from Shigella boydii serotype 18 (strain CDC 3083-94 / BS512).